The chain runs to 675 residues: Potassium-transporting ATPase ATP-binding subunit (675 aa).

The next 4 helical transmembrane spans lie at 34–54 (IMFVVEVGMILTLILICFPDI), 65–85 (LITIFIILLITILFANFSEAF), 216–236 (IALFTLLTTLTIIFLVVIVTL), and 245–265 (LILPIAMLIALTVCLIPTTIG). Asp-304 functions as the 4-aspartylphosphate intermediate in the catalytic mechanism. Residues Asp-341, Glu-345, 372 to 379 (FTAETRMS), and Lys-390 each bind ATP. 2 residues coordinate Mg(2+): Asp-513 and Asp-517. 3 helical membrane-spanning segments follow: residues 569–591 (ALTTFSLANDVAKYFAILPALMM), 611–631 (AIISALIFNALIIVALIPIAM), and 644–664 (IFINNMLIYGLGGLIVPFLGI).

Belongs to the cation transport ATPase (P-type) (TC 3.A.3) family. Type IA subfamily. The system is composed of three essential subunits: KdpA, KdpB and KdpC.

It localises to the cell membrane. It catalyses the reaction K(+)(out) + ATP + H2O = K(+)(in) + ADP + phosphate + H(+). Its function is as follows. Part of the high-affinity ATP-driven potassium transport (or Kdp) system, which catalyzes the hydrolysis of ATP coupled with the electrogenic transport of potassium into the cytoplasm. This subunit is responsible for energy coupling to the transport system and for the release of the potassium ions to the cytoplasm. The polypeptide is Potassium-transporting ATPase ATP-binding subunit (Staphylococcus aureus (strain bovine RF122 / ET3-1)).